The primary structure comprises 1434 residues: MGARASVLSGGKLDAWEKIRLRPGGKKKYRLKHIVWASRELKRFALNPGLLETTEGCKKIIGQLQPSLQTGSEELKSLFNTIVVLYYVHQKIEVRDTKEALDKLQEEQDKHQQKTQQATADKGVSKGVSQNYPILQNLQGQMVHQSLSPRTLNAWVKVIEEKAFSPEVIPMFSALSEGATPQDLNTMLNTVGGHQAAMQMLKDTINEEAAEWDRLHPVHAGPIPPGQMREPRGSDIAGTTSTLQEQIAWMTSNPPVPVGEIYKRWIILGLNKIVRMYSPVSILDIKQGPKEPFRDYVDRFFKTLRAEQATQEVKGWMTETLLVQNANPDCKTILKALGPGATLEEMMTACQGVGGPSHKARILAEAMSKATGAAIMMQKSNFKGQRRIVKCFNCGKEGHIARNCRAPRKRGCWKCGQEGHQMKDCTERQANFFRENVAFQQGEARKFSSEQTRANSPASRELRVRGGDSSLPEAGAERQGTGSSLDFPQITLWQRPVVTIKVGGQLREALLDTGADDTVLEDINLPGKWKPKMIGGIGGFIKVRQYDQVSIEICGQKAIGTVLVGPTPVNIIGRNMLTQIGCTLNFPISPIETVPVKLKPGMDGPKVKQWPLTEEKIKALTEICTEMEKEGKISKIGPENPYNTPVFAIKKKDSTKWRKLVDFRELNKRTQDFWEVQLGIPHPAGLKKKRSVTVLDVGDAYFSVPLDKEFRKYTAFTIPSINNETPGIRYQYNVLPQGWKGSPAIFQSSMIKILEPFRKENPEIVIYQYMDDLYVGSDLEIGQHRAKIEELREHLLRWGFTTPDKKHQKEPPFLWMGYELHPDKWTVQAIQLPDKSSWTVNDIQKLVGKLNWASQIYPGIRVKHLCKLLRGTKALTDVVPLTAEAELELAENREILKEPVHGVYYDPSKDLIAEIQKQGHDQWTYQIYQEPHKNLKTGKYARRKSAHTNDVKQLTEVVQKVATEGIVIWGKVPKFRLPIQKETWEIWWTEYWQATWIPEWEFVNTPPLVKLWYQLETEPIIGAETFYVDGAANRETKLGKAGYITDRGRQKVVSLTETTNQKTELQAIQLALQDSGSEVNIVTDSQYALGIIQAHPDKSESEIVNQIIEQLIQKERVYLSWVPAHKGIGGNEQVDKLVSTGIRKVLFLDGIDKAQEEHEKYHSNWRAMASDFNLPPVVAKEIVASCDKCQLKGEAMHGQVDCSPGIWQLDCTHLEGKIILVAVHVASGYIEAEVIPAETGQEAAYFILKLAGRWPVKIIHTDNGSNFTSAVVKAACWWAGIQQEFGIPYNPQSQGVVESMNKELKKIIGQVRDQAEHLKTAVQMAVFIHNFKRKGGIGGYSAGERIIDIIATDIQTKELQKQISKIQNFRVYFRDSRDPVWKGPAKLLWKGEGAVVIQDNNEIKVIPRRKAKIIRDYGKQMAGDDCVAGRQDED.

Gly-2 carries N-myristoyl glycine; by host lipidation. Residues 7 to 31 (VLSGGKLDAWEKIRLRPGGKKKYRL) are interaction with Gp41. The segment at 8–43 (LSGGKLDAWEKIRLRPGGKKKYRLKHIVWASRELKR) is interaction with host CALM1. The segment at 12–19 (KLDAWEKI) is interaction with host AP3D1. The tract at residues 14–33 (DAWEKIRLRPGGKKKYRLKH) is interaction with membrane phosphatidylinositol 4,5-bisphosphate and RNA. The Nuclear export signal motif lies at 16 to 22 (WEKIRLR). The short motif at 26–32 (KKKYRLK) is the Nuclear localization signal element. Positions 73–77 (EELKS) are interaction with membrane phosphatidylinositol 4,5-bisphosphate. The span at 103–112 (KLQEEQDKHQ) shows a compositional bias: basic and acidic residues. Residues 103–124 (KLQEEQDKHQQKTQQATADKGV) form a disordered region. Residue Tyr-132 is modified to Phosphotyrosine; by host. Residues 189–227 (NTVGGHQAAMQMLKDTINEEAAEWDRLHPVHAGPIPPGQ) are interaction with human PPIA/CYPA and NUP153. Residues 277–363 (YSPVSILDIK…GGPSHKARIL (87 aa)) form a dimerization/Multimerization of capsid protein p24 region. 2 consecutive CCHC-type zinc fingers follow at residues 389–406 (VKCF…NCRA) and 410–427 (RGCW…DCTE). The interval 443–483 (EARKFSSEQTRANSPASRELRVRGGDSSLPEAGAERQGTGS) is disordered. The segment covering 449–458 (SEQTRANSPA) has biased composition (polar residues). Residues 488–492 (PQITL) are dimerization of protease. A Peptidase A2 domain is found at 507-576 (REALLDTGAD…TPVNIIGRNM (70 aa)). Asp-512 acts as the For protease activity; shared with dimeric partner in catalysis. 2 dimerization of protease regions span residues 536–542 (GIGGFIK) and 575–587 (NMLT…LNFP). Residues 630–820 (EGKISKIGPE…PPFLWMGYEL (191 aa)) enclose the Reverse transcriptase domain. Residues Asp-696, Asp-771, and Asp-772 each contribute to the Mg(2+) site. The RT 'primer grip' stretch occupies residues 813-821 (FLWMGYELH). The Tryptophan repeat motif signature appears at 984-1000 (WEIWWTEYWQATWIPEW). In terms of domain architecture, RNase H type-1 spans 1020–1143 (IIGAETFYVD…VDKLVSTGIR (124 aa)). Asp-1029, Glu-1064, Asp-1084, and Asp-1135 together coordinate Mg(2+). The Integrase-type zinc-finger motif lies at 1149 to 1190 (DGIDKAQEEHEKYHSNWRAMASDFNLPPVVAKEIVASCDKCQ). Positions 1158, 1162, 1186, and 1189 each coordinate Zn(2+). Positions 1200–1350 (VDCSPGIWQL…SAGERIIDII (151 aa)) constitute an Integrase catalytic domain. Positions 1210, 1262, and 1298 each coordinate Mg(2+). Positions 1369-1416 (FRVYFRDSRDPVWKGPAKLLWKGEGAVVIQDNNEIKVIPRRKAKIIRD) form a DNA-binding region, integrase-type.

Homotrimer; further assembles as hexamers of trimers. Interacts with gp41 (via C-terminus). Interacts with host CALM1; this interaction induces a conformational change in the Matrix protein, triggering exposure of the myristate group. Interacts with host AP3D1; this interaction allows the polyprotein trafficking to multivesicular bodies during virus assembly. Part of the pre-integration complex (PIC) which is composed of viral genome, matrix protein, Vpr and integrase. In terms of assembly, homodimer; the homodimer further multimerizes as homohexamers or homopentamers. Interacts with human PPIA/CYPA; This interaction stabilizes the capsid. Interacts with human NUP153. Interacts with host PDZD8; this interaction stabilizes the capsid. Interacts with monkey TRIM5; this interaction destabilizes the capsid. As to quaternary structure, homodimer, whose active site consists of two apposed aspartic acid residues. Heterodimer of p66 RT and p51 RT (RT p66/p51). Heterodimerization of RT is essential for DNA polymerase activity. The overall folding of the subdomains is similar in p66 RT and p51 RT but the spatial arrangements of the subdomains are dramatically different. In terms of assembly, homotetramer; may further associate as a homohexadecamer. Part of the pre-integration complex (PIC) which is composed of viral genome, matrix protein, Vpr and integrase. Interacts with human SMARCB1/INI1 and human PSIP1/LEDGF isoform 1. Interacts with human KPNA3; this interaction might play a role in nuclear import of the pre-integration complex. Interacts with human NUP153; this interaction might play a role in nuclear import of the pre-integration complex. The cofactor is Mg(2+). In terms of processing, specific enzymatic cleavages by the viral protease yield mature proteins. The protease is released by autocatalytic cleavage. The polyprotein is cleaved during and after budding, this process is termed maturation. Proteolytic cleavage of p66 RT removes the RNase H domain to yield the p51 RT subunit. Nucleocapsid protein p7 might be further cleaved after virus entry. Post-translationally, tyrosine phosphorylated presumably in the virion by a host kinase. Phosphorylation is apparently not a major regulator of membrane association. Phosphorylated possibly by host MAPK1; this phosphorylation is necessary for Pin1-mediated virion uncoating. In terms of processing, methylated by host PRMT6, impairing its function by reducing RNA annealing and the initiation of reverse transcription.

Its subcellular location is the host cell membrane. The protein localises to the host endosome. It localises to the host multivesicular body. It is found in the virion membrane. The protein resides in the host nucleus. Its subcellular location is the host cytoplasm. The protein localises to the virion. The catalysed reaction is Specific for a P1 residue that is hydrophobic, and P1' variable, but often Pro.. It catalyses the reaction Endohydrolysis of RNA in RNA/DNA hybrids. Three different cleavage modes: 1. sequence-specific internal cleavage of RNA. Human immunodeficiency virus type 1 and Moloney murine leukemia virus enzymes prefer to cleave the RNA strand one nucleotide away from the RNA-DNA junction. 2. RNA 5'-end directed cleavage 13-19 nucleotides from the RNA end. 3. DNA 3'-end directed cleavage 15-20 nucleotides away from the primer terminus.. It carries out the reaction 3'-end directed exonucleolytic cleavage of viral RNA-DNA hybrid.. The enzyme catalyses DNA(n) + a 2'-deoxyribonucleoside 5'-triphosphate = DNA(n+1) + diphosphate. Its activity is regulated as follows. Protease: The viral protease is inhibited by many synthetic protease inhibitors (PIs), such as amprenavir, atazanavir, indinavir, loprinavir, nelfinavir, ritonavir and saquinavir. Use of protease inhibitors in tritherapy regimens permit more ambitious therapeutic strategies. Reverse transcriptase/ribonuclease H: RT can be inhibited either by nucleoside RT inhibitors (NRTIs) or by non nucleoside RT inhibitors (NNRTIs). NRTIs act as chain terminators, whereas NNRTIs inhibit DNA polymerization by binding a small hydrophobic pocket near the RT active site and inducing an allosteric change in this region. Classical NRTIs are abacavir, adefovir (PMEA), didanosine (ddI), lamivudine (3TC), stavudine (d4T), tenofovir (PMPA), zalcitabine (ddC), and zidovudine (AZT). Classical NNRTIs are atevirdine (BHAP U-87201E), delavirdine, efavirenz (DMP-266), emivirine (I-EBU), and nevirapine (BI-RG-587). The tritherapies used as a basic effective treatment of AIDS associate two NRTIs and one NNRTI. Functionally, mediates, with Gag polyprotein, the essential events in virion assembly, including binding the plasma membrane, making the protein-protein interactions necessary to create spherical particles, recruiting the viral Env proteins, and packaging the genomic RNA via direct interactions with the RNA packaging sequence (Psi). Gag-Pol polyprotein may regulate its own translation, by the binding genomic RNA in the 5'-UTR. At low concentration, the polyprotein would promote translation, whereas at high concentration, the polyprotein would encapsidate genomic RNA and then shut off translation. In terms of biological role, targets the polyprotein to the plasma membrane via a multipartite membrane-binding signal, that includes its myristoylated N-terminus. Matrix protein is part of the pre-integration complex. Implicated in the release from host cell mediated by Vpu. Binds to RNA. Its function is as follows. Forms the conical core that encapsulates the genomic RNA-nucleocapsid complex in the virion. Most core are conical, with only 7% tubular. The core is constituted by capsid protein hexamer subunits. The core is disassembled soon after virion entry. Host restriction factors such as TRIM5-alpha or TRIMCyp bind retroviral capsids and cause premature capsid disassembly, leading to blocks in reverse transcription. Capsid restriction by TRIM5 is one of the factors which restricts HIV-1 to the human species. Host PIN1 apparently facilitates the virion uncoating. On the other hand, interactions with PDZD8 or CYPA stabilize the capsid. Encapsulates and protects viral dimeric unspliced genomic RNA (gRNA). Binds these RNAs through its zinc fingers. Acts as a nucleic acid chaperone which is involved in rearangement of nucleic acid secondary structure during gRNA retrotranscription. Also facilitates template switch leading to recombination. As part of the polyprotein, participates in gRNA dimerization, packaging, tRNA incorporation and virion assembly. Functionally, aspartyl protease that mediates proteolytic cleavages of Gag and Gag-Pol polyproteins during or shortly after the release of the virion from the plasma membrane. Cleavages take place as an ordered, step-wise cascade to yield mature proteins. This process is called maturation. Displays maximal activity during the budding process just prior to particle release from the cell. Also cleaves Nef and Vif, probably concomitantly with viral structural proteins on maturation of virus particles. Hydrolyzes host EIF4GI and PABP1 in order to shut off the capped cellular mRNA translation. The resulting inhibition of cellular protein synthesis serves to ensure maximal viral gene expression and to evade host immune response. Also mediates cleavage of host YTHDF3. Mediates cleavage of host CARD8, thereby activating the CARD8 inflammasome, leading to the clearance of latent HIV-1 in patient CD4(+) T-cells after viral reactivation; in contrast, HIV-1 can evade CARD8-sensing when its protease remains inactive in infected cells prior to viral budding. In terms of biological role, multifunctional enzyme that converts the viral RNA genome into dsDNA in the cytoplasm, shortly after virus entry into the cell. This enzyme displays a DNA polymerase activity that can copy either DNA or RNA templates, and a ribonuclease H (RNase H) activity that cleaves the RNA strand of RNA-DNA heteroduplexes in a partially processive 3' to 5' endonucleasic mode. Conversion of viral genomic RNA into dsDNA requires many steps. A tRNA(3)-Lys binds to the primer-binding site (PBS) situated at the 5'-end of the viral RNA. RT uses the 3' end of the tRNA primer to perform a short round of RNA-dependent minus-strand DNA synthesis. The reading proceeds through the U5 region and ends after the repeated (R) region which is present at both ends of viral RNA. The portion of the RNA-DNA heteroduplex is digested by the RNase H, resulting in a ssDNA product attached to the tRNA primer. This ssDNA/tRNA hybridizes with the identical R region situated at the 3' end of viral RNA. This template exchange, known as minus-strand DNA strong stop transfer, can be either intra- or intermolecular. RT uses the 3' end of this newly synthesized short ssDNA to perform the RNA-dependent minus-strand DNA synthesis of the whole template. RNase H digests the RNA template except for two polypurine tracts (PPTs) situated at the 5'-end and near the center of the genome. It is not clear if both polymerase and RNase H activities are simultaneous. RNase H probably can proceed both in a polymerase-dependent (RNA cut into small fragments by the same RT performing DNA synthesis) and a polymerase-independent mode (cleavage of remaining RNA fragments by free RTs). Secondly, RT performs DNA-directed plus-strand DNA synthesis using the PPTs that have not been removed by RNase H as primers. PPTs and tRNA primers are then removed by RNase H. The 3' and 5' ssDNA PBS regions hybridize to form a circular dsDNA intermediate. Strand displacement synthesis by RT to the PBS and PPT ends produces a blunt ended, linear dsDNA copy of the viral genome that includes long terminal repeats (LTRs) at both ends. Its function is as follows. Catalyzes viral DNA integration into the host chromosome, by performing a series of DNA cutting and joining reactions. This enzyme activity takes place after virion entry into a cell and reverse transcription of the RNA genome in dsDNA. The first step in the integration process is 3' processing. This step requires a complex comprising the viral genome, matrix protein, Vpr and integrase. This complex is called the pre-integration complex (PIC). The integrase protein removes 2 nucleotides from each 3' end of the viral DNA, leaving recessed CA OH's at the 3' ends. In the second step, the PIC enters cell nucleus. This process is mediated through integrase and Vpr proteins, and allows the virus to infect a non dividing cell. This ability to enter the nucleus is specific of lentiviruses, other retroviruses cannot and rely on cell division to access cell chromosomes. In the third step, termed strand transfer, the integrase protein joins the previously processed 3' ends to the 5' ends of strands of target cellular DNA at the site of integration. The 5'-ends are produced by integrase-catalyzed staggered cuts, 5 bp apart. A Y-shaped, gapped, recombination intermediate results, with the 5'-ends of the viral DNA strands and the 3' ends of target DNA strands remaining unjoined, flanking a gap of 5 bp. The last step is viral DNA integration into host chromosome. This involves host DNA repair synthesis in which the 5 bp gaps between the unjoined strands are filled in and then ligated. Since this process occurs at both cuts flanking the HIV genome, a 5 bp duplication of host DNA is produced at the ends of HIV-1 integration. Alternatively, Integrase may catalyze the excision of viral DNA just after strand transfer, this is termed disintegration. The polypeptide is Gag-Pol polyprotein (gag-pol) (Homo sapiens (Human)).